The following is a 61-amino-acid chain: Double gene block protein 1 (61 aa).

Residues 15–45 are disordered; sequence LAGNRGKQKTRRSVAKDAIRKPASDSTNGGN. The RNA-binding stretch occupies residues 17-35; the sequence is GNRGKQKTRRSVAKDAIRK. The segment covering 28–37 has biased composition (basic and acidic residues); it reads VAKDAIRKPA.

It belongs to the carmovirus double gene block protein 1 family. Homodimer.

In terms of biological role, cell-to-cell movement. Displays RNA-binding activity. The chain is Double gene block protein 1 from Carnation mottle virus (isolate China/Shanghai) (CarMV).